The sequence spans 1170 residues: DNA-directed RNA polymerase subunit beta' (1170 aa).

The Zn(2+) site is built by C60, C62, C75, and C78. The Mg(2+) site is built by D449, D451, and D453. 4 residues coordinate Zn(2+): C774, C848, C855, and C858. The disordered stretch occupies residues 1145–1170 (EPGEENGEPGGERLYGMDELYGETAN).

It belongs to the RNA polymerase beta' chain family. As to quaternary structure, the RNAP catalytic core consists of 2 alpha, 1 beta, 1 beta' and 1 omega subunit. When a sigma factor is associated with the core the holoenzyme is formed, which can initiate transcription. The cofactor is Mg(2+). Requires Zn(2+) as cofactor.

It catalyses the reaction RNA(n) + a ribonucleoside 5'-triphosphate = RNA(n+1) + diphosphate. DNA-dependent RNA polymerase catalyzes the transcription of DNA into RNA using the four ribonucleoside triphosphates as substrates. This Pelotomaculum thermopropionicum (strain DSM 13744 / JCM 10971 / SI) protein is DNA-directed RNA polymerase subunit beta'.